A 227-amino-acid chain; its full sequence is Uridylate kinase (227 aa).

9-10 (GS) is an ATP binding site. Glycine 44 is a binding site for UMP. ATP-binding residues include glycine 45 and arginine 49. Residues aspartate 66 and 114 to 120 (TVPGHTT) contribute to the UMP site. Threonine 140, phenylalanine 146, and aspartate 149 together coordinate ATP.

It belongs to the UMP kinase family. As to quaternary structure, homohexamer.

It localises to the cytoplasm. The enzyme catalyses UMP + ATP = UDP + ADP. The protein operates within pyrimidine metabolism; CTP biosynthesis via de novo pathway; UDP from UMP (UMPK route): step 1/1. With respect to regulation, inhibited by UTP. Functionally, catalyzes the reversible phosphorylation of UMP to UDP. This chain is Uridylate kinase, found in Natronomonas pharaonis (strain ATCC 35678 / DSM 2160 / CIP 103997 / JCM 8858 / NBRC 14720 / NCIMB 2260 / Gabara) (Halobacterium pharaonis).